Here is a 469-residue protein sequence, read N- to C-terminus: Aspartyl/glutamyl-tRNA(Asn/Gln) amidotransferase subunit B (469 aa).

It belongs to the GatB/GatE family. GatB subfamily. As to quaternary structure, heterotrimer of A, B and C subunits.

It catalyses the reaction L-glutamyl-tRNA(Gln) + L-glutamine + ATP + H2O = L-glutaminyl-tRNA(Gln) + L-glutamate + ADP + phosphate + H(+). The enzyme catalyses L-aspartyl-tRNA(Asn) + L-glutamine + ATP + H2O = L-asparaginyl-tRNA(Asn) + L-glutamate + ADP + phosphate + 2 H(+). Allows the formation of correctly charged Asn-tRNA(Asn) or Gln-tRNA(Gln) through the transamidation of misacylated Asp-tRNA(Asn) or Glu-tRNA(Gln) in organisms which lack either or both of asparaginyl-tRNA or glutaminyl-tRNA synthetases. The reaction takes place in the presence of glutamine and ATP through an activated phospho-Asp-tRNA(Asn) or phospho-Glu-tRNA(Gln). The chain is Aspartyl/glutamyl-tRNA(Asn/Gln) amidotransferase subunit B from Methanococcus aeolicus (strain ATCC BAA-1280 / DSM 17508 / OCM 812 / Nankai-3).